Here is a 380-residue protein sequence, read N- to C-terminus: Erythronate-4-phosphate dehydrogenase (380 aa).

Residues Ser-45 and Thr-66 each coordinate substrate. Residues 126–127 (QV), Asp-146, Thr-174, 205–207 (ASR), and Asp-231 each bind NAD(+). Residue Arg-207 is part of the active site. Glu-236 is an active-site residue. His-253 (proton donor) is an active-site residue. Residue Gly-256 participates in NAD(+) binding. Tyr-257 serves as a coordination point for substrate.

This sequence belongs to the D-isomer specific 2-hydroxyacid dehydrogenase family. PdxB subfamily. As to quaternary structure, homodimer.

It localises to the cytoplasm. The enzyme catalyses 4-phospho-D-erythronate + NAD(+) = (R)-3-hydroxy-2-oxo-4-phosphooxybutanoate + NADH + H(+). It functions in the pathway cofactor biosynthesis; pyridoxine 5'-phosphate biosynthesis; pyridoxine 5'-phosphate from D-erythrose 4-phosphate: step 2/5. Its function is as follows. Catalyzes the oxidation of erythronate-4-phosphate to 3-hydroxy-2-oxo-4-phosphonooxybutanoate. The sequence is that of Erythronate-4-phosphate dehydrogenase from Pseudomonas syringae pv. syringae (strain B728a).